We begin with the raw amino-acid sequence, 332 residues long: Biotin synthase (332 aa).

Positions 53–282 (HFGKKVKLNM…TKEIRISGGR (230 aa)) constitute a Radical SAM core domain. The [4Fe-4S] cluster site is built by C71, C75, and C78. Residues C115, C147, C207, and R277 each coordinate [2Fe-2S] cluster.

It belongs to the radical SAM superfamily. Biotin synthase family. In terms of assembly, homodimer. It depends on [4Fe-4S] cluster as a cofactor. Requires [2Fe-2S] cluster as cofactor.

It carries out the reaction (4R,5S)-dethiobiotin + (sulfur carrier)-SH + 2 reduced [2Fe-2S]-[ferredoxin] + 2 S-adenosyl-L-methionine = (sulfur carrier)-H + biotin + 2 5'-deoxyadenosine + 2 L-methionine + 2 oxidized [2Fe-2S]-[ferredoxin]. Its pathway is cofactor biosynthesis; biotin biosynthesis; biotin from 7,8-diaminononanoate: step 2/2. Its function is as follows. Catalyzes the conversion of dethiobiotin (DTB) to biotin by the insertion of a sulfur atom into dethiobiotin via a radical-based mechanism. In Bacillus cereus (strain ATCC 14579 / DSM 31 / CCUG 7414 / JCM 2152 / NBRC 15305 / NCIMB 9373 / NCTC 2599 / NRRL B-3711), this protein is Biotin synthase.